We begin with the raw amino-acid sequence, 289 residues long: Elongation factor Ts (289 aa).

The involved in Mg(2+) ion dislocation from EF-Tu stretch occupies residues 82–85; the sequence is TDFL.

The protein belongs to the EF-Ts family.

It localises to the cytoplasm. Functionally, associates with the EF-Tu.GDP complex and induces the exchange of GDP to GTP. It remains bound to the aminoacyl-tRNA.EF-Tu.GTP complex up to the GTP hydrolysis stage on the ribosome. The protein is Elongation factor Ts of Azotobacter vinelandii (strain DJ / ATCC BAA-1303).